A 648-amino-acid chain; its full sequence is Biosynthetic arginine decarboxylase (648 aa).

Position 109 is an N6-(pyridoxal phosphate)lysine (Lys109). 291 to 301 contacts substrate; the sequence is LDVGGGLGVDY.

Belongs to the Orn/Lys/Arg decarboxylase class-II family. SpeA subfamily. Requires Mg(2+) as cofactor. It depends on pyridoxal 5'-phosphate as a cofactor.

The enzyme catalyses L-arginine + H(+) = agmatine + CO2. It participates in amine and polyamine biosynthesis; agmatine biosynthesis; agmatine from L-arginine: step 1/1. Catalyzes the biosynthesis of agmatine from arginine. The polypeptide is Biosynthetic arginine decarboxylase (Prochlorococcus marinus (strain MIT 9303)).